The following is a 305-amino-acid chain: Suppressor of activated egl-4 protein 2 (305 aa).

The tract at residues 138–168 (KRGYESDSSDVSGVSHCSDAKRRRGRPRKDE) is disordered. The segment at residues 158-170 (KRRRGRPRKDEEA) is a DNA-binding region (a.T hook).

In terms of assembly, interacts with phosphorylated egl-4. May interact with itself. May be a component of a histone deacetylase complex containing saeg-2, saeg-1 and hda-2. Ubiquitously expressed.

It is found in the nucleus. In terms of biological role, as a likely component of a histone deacetylase complex, together with saeg-1 and hda-2, functions downstream of the cAMP-dependent kinase egl-4 to regulate the expression of genes required for egg-laying and foraging. This chain is Suppressor of activated egl-4 protein 2, found in Caenorhabditis elegans.